The chain runs to 446 residues: Probable glycine dehydrogenase (decarboxylating) subunit 1 (446 aa).

This sequence belongs to the GcvP family. N-terminal subunit subfamily. In terms of assembly, the glycine cleavage system is composed of four proteins: P, T, L and H. In this organism, the P 'protein' is a heterodimer of two subunits.

The catalysed reaction is N(6)-[(R)-lipoyl]-L-lysyl-[glycine-cleavage complex H protein] + glycine + H(+) = N(6)-[(R)-S(8)-aminomethyldihydrolipoyl]-L-lysyl-[glycine-cleavage complex H protein] + CO2. The glycine cleavage system catalyzes the degradation of glycine. The P protein binds the alpha-amino group of glycine through its pyridoxal phosphate cofactor; CO(2) is released and the remaining methylamine moiety is then transferred to the lipoamide cofactor of the H protein. The sequence is that of Probable glycine dehydrogenase (decarboxylating) subunit 1 from Thermococcus onnurineus (strain NA1).